Reading from the N-terminus, the 340-residue chain is Photosystem II assembly lipoprotein Ycf48 (340 aa).

An N-terminal signal peptide occupies residues 1–26 (MTSVLGLLKPLKKAIAAIAVLVLCIG). Cysteine 27 is lipidated: N-palmitoyl cysteine. A lipid anchor (S-diacylglycerol cysteine) is attached at cysteine 27.

The protein belongs to the Ycf48 family. Part of early PSII assembly complexes which includes D1 (psbA) and PsbI; not found in mature PSII. Binds to the lumenal side of PSII complexes. Interacts with YidC.

It localises to the cellular thylakoid membrane. A factor required for optimal assembly of photosystem II (PSII), acting in the early stages of PSII assembly. Also plays a role in replacement of photodamaged D1 (psbA). Assists YidC in synthesis of chlorophyll-binding proteins. In Picosynechococcus sp. (strain ATCC 27264 / PCC 7002 / PR-6) (Agmenellum quadruplicatum), this protein is Photosystem II assembly lipoprotein Ycf48.